The chain runs to 759 residues: MKIAIVLLAIVGLAASASITDKKVKIADKDFLAKQKFLFEIVYRVEDPLMFEEWIKMGKSFTFDKADYNHFDMYMDKFYEAYKYGAILPKGEFFYYAKNWEVFQRNVAFARMHCNEGMFVYALTLAVIHRDDFHGLILPSIYEIFPQYFFNSKFVYEAEKFDYDVWSKYIMYEKEYKDILYKDYATFYKNHDNHYYYFFTKDFKTYQWWKMMGLGEHWYSEDRFMLRDNMDKYNKDSKYLEIFEGTKMFFMPVDYTRDIEFFNKESALSYFTEDVGFNAYWYYLNMDYAFFLDGKTYGLNKDRRGEYWLYNVRQLLSRYYMERLSHGFGEIPAFSFIDSIEYGYNPQLVYHNGVGFSYRKNYYEVESFGKFDYFYKVLDFFNRMDEIITKGVYVTYDGKTIDLRKPESIEYIGSIMQGNVDTLHSYFFKYWYMFAHMYLAYDNTQTLQVFPHIFLNYETSMRDPMFYMFYKKIASVYFQFFNYVKPYTHEELLFPGVTIKDVKVSELVTYFDLVDFDVTNLMNDKMTFVDGQFVWDKTLLARQMRLNHKPFDFDFVIESDKAQKVVIRTYLGPKYDEFGRVISLTENRENFMELDSFLYTLKSGVNEFKRYSKDFYWTVEDRTTYTELYKYVMLALQGKYDFPLDISEPHCGFPDRLVLPHGWYKGMPMQFFFYVTPFTTEYEQFSTYDYSYSCGLGSGVRYIDETCFGYPFDREIDEYEFFVPNMYFKDVKIFHQDTFEKYFEHKYEKFGHFDYNYHH.

The signal sequence occupies residues 1-15 (MKIAIVLLAIVGLAA).

This sequence belongs to the hemocyanin family. As to quaternary structure, heterohexamer. As to expression, fat body.

The protein localises to the secreted. The protein resides in the extracellular space. Functionally, arylphorin is a larval storage protein (LSP) which may serve as a storage protein used primarily as a source of aromatic amino acids for protein synthesis during metamorphosis. It is a constituent of the sclerotizing system of the cuticle, and serves as a carrier for ecdysteroid hormone. This Calliphora vicina (Blue blowfly) protein is Arylphorin subunit C223.